Reading from the N-terminus, the 231-residue chain is Probable septum site-determining protein MinC (231 aa).

The interval 102–125 is disordered; that stretch reads KEKAPRPAPAPQAPAQNTTPVTKT.

It belongs to the MinC family. In terms of assembly, interacts with MinD and FtsZ.

Cell division inhibitor that blocks the formation of polar Z ring septums. Rapidly oscillates between the poles of the cell to destabilize FtsZ filaments that have formed before they mature into polar Z rings. Prevents FtsZ polymerization. The sequence is that of Probable septum site-determining protein MinC from Escherichia coli O6:K15:H31 (strain 536 / UPEC).